Consider the following 915-residue polypeptide: Protein MEI2-like 1 (915 aa).

The disordered stretch occupies residues 1–90; that stretch reads MPSDIMEQRG…NTTNGSQWES (90 aa). The segment covering 16–25 has biased composition (basic and acidic residues); it reads HFHEDIHITS. The span at 50-65 shows a compositional bias: polar residues; it reads MPKSSWTSESYQLKPQ. The segment covering 66–77 has biased composition (low complexity); it reads SSFSGSHPSGSP. Ser76 bears the Phosphoserine mark. A compositionally biased stretch (polar residues) spans 78-89; it reads NARNTTNGSQWE. 2 consecutive RRM domains span residues 217-290 and 302-375; these read RTLL…YSIS and GALL…PTYP. Disordered stretches follow at residues 690-723 and 854-915; these read PGRS…SSSN and LFHT…LKEN. The segment covering 705–723 has biased composition (basic and acidic residues); sequence PNERYRNLSHRRSESSSSN. Residues 882–898 are compositionally biased toward polar residues; it reads RSSSIDNYNSFSISSVS.

In terms of tissue distribution, expressed in roots, shoots, leaves, flowers and siliques.

Functionally, probable RNA-binding transcriptional activator that plays a role in meiosis and vegetative growth. May be a downstream effector of TOR signaling pathway and recruited by RAPTOR1 for TOR substrate. The polypeptide is Protein MEI2-like 1 (ML1) (Arabidopsis thaliana (Mouse-ear cress)).